A 481-amino-acid chain; its full sequence is MAKKDQEFVKDITNMDEDFPQWYTDVITKTDLVDYSPVKGFMVIKPYGYAIWENIQAFLDRRFKETGHQNCYFPLLIPESLLNKEKEHVEGFAPEVAWVTHGGSEKLAERLCVRPTSETIICSMYSKWLTSYRELPYLYNQWCSVVRWEKSTRPFLRTSEFLWQEGHTLHETAEEAQAETLQMLAIYKEMAEDLLAIPVVDGRKSDRERFAGAAATYTIEALMHDGKALQSGTSHNLAQHFTKAFDITFQGRTGELEYPHHTSWGASTRLIGGIIMVHGDNRGLVLPPRVAPTQVVIIPIAQNKEGVLDKAYEIKKELEAKGIRVTLDDDTNYSPGWKFNQYEMKGVPLRLEIGPRDIENNVAMIARRDTLSKDSYSLDNIGDTVKNLLDTVHTDMLERARAHRDSKTFTFKDYEEFKRKMIETPGFAKGMWCGEEECEAKIKEDTGVTIRCIPFVQENLGETCQFCGKPAKHMVYLAKAY.

The protein belongs to the class-II aminoacyl-tRNA synthetase family. ProS type 3 subfamily. In terms of assembly, homodimer.

It is found in the cytoplasm. It catalyses the reaction tRNA(Pro) + L-proline + ATP = L-prolyl-tRNA(Pro) + AMP + diphosphate. In terms of biological role, catalyzes the attachment of proline to tRNA(Pro) in a two-step reaction: proline is first activated by ATP to form Pro-AMP and then transferred to the acceptor end of tRNA(Pro). Can inadvertently accommodate and process cysteine. Misacylated Cys-tRNA(Pro) is not edited by ProRS; this function may be provided by ProX. In Acetoanaerobium sticklandii (strain ATCC 12662 / DSM 519 / JCM 1433 / CCUG 9281 / NCIMB 10654 / HF) (Clostridium sticklandii), this protein is Proline--tRNA ligase (proS).